The following is an 81-amino-acid chain: MFSLFIENRYLHLLHALSLVTDVSRIQSHFGTLPRIKDEHRSHQESKYHFGGHVQIRFGSDQDWRQGHQSFLLKTGPCKKR.

Expressed in fetal brain.

This is an uncharacterized protein from Homo sapiens (Human).